The chain runs to 129 residues: Small ribosomal subunit protein uS12 (129 aa).

Positions 1–25 (MPTYNQLVRFGRKSKTRKTKSPALE) are disordered. Over residues 10–20 (FGRKSKTRKTK) the composition is skewed to basic residues. Asp-89 is modified (3-methylthioaspartic acid). The segment at 110–129 (RKQGRSRYGAPSKQVAVTKK) is disordered.

The protein belongs to the universal ribosomal protein uS12 family. Part of the 30S ribosomal subunit. Contacts proteins S8 and S17. May interact with IF1 in the 30S initiation complex.

Its function is as follows. With S4 and S5 plays an important role in translational accuracy. Functionally, interacts with and stabilizes bases of the 16S rRNA that are involved in tRNA selection in the A site and with the mRNA backbone. Located at the interface of the 30S and 50S subunits, it traverses the body of the 30S subunit contacting proteins on the other side and probably holding the rRNA structure together. The combined cluster of proteins S8, S12 and S17 appears to hold together the shoulder and platform of the 30S subunit. The chain is Small ribosomal subunit protein uS12 from Rickettsia canadensis (strain McKiel).